Reading from the N-terminus, the 388-residue chain is Mannitol-1-phosphate 5-dehydrogenase (388 aa).

5–16 (AVHFGGGNIGRG) serves as a coordination point for NAD(+). Residue Lys213 is part of the active site.

Belongs to the mannitol dehydrogenase family. Monomer.

The catalysed reaction is D-mannitol 1-phosphate + NAD(+) = beta-D-fructose 6-phosphate + NADH + H(+). In terms of biological role, catalyzes the NAD(H)-dependent interconversion of D-fructose 6-phosphate and D-mannitol 1-phosphate in the mannitol metabolic pathway. The protein is Mannitol-1-phosphate 5-dehydrogenase of Ajellomyces capsulatus (strain NAm1 / WU24) (Darling's disease fungus).